The sequence spans 342 residues: L-threonine 3-dehydrogenase (342 aa).

Cys-38 contributes to the Zn(2+) binding site. Residues Thr-40 and His-43 each act as charge relay system in the active site. The Zn(2+) site is built by His-63, Glu-64, Cys-93, Cys-96, Cys-99, and Cys-107. Residues Ile-175, Asp-195, Arg-200, 262-264 (LGL), and 286-287 (IY) contribute to the NAD(+) site.

It belongs to the zinc-containing alcohol dehydrogenase family. Homotetramer. The cofactor is Zn(2+).

The protein localises to the cytoplasm. It catalyses the reaction L-threonine + NAD(+) = (2S)-2-amino-3-oxobutanoate + NADH + H(+). It participates in amino-acid degradation; L-threonine degradation via oxydo-reductase pathway; glycine from L-threonine: step 1/2. In terms of biological role, catalyzes the NAD(+)-dependent oxidation of L-threonine to 2-amino-3-ketobutyrate. In Streptomyces coelicolor (strain ATCC BAA-471 / A3(2) / M145), this protein is L-threonine 3-dehydrogenase.